The chain runs to 471 residues: Glutamate--tRNA ligase 1 (471 aa).

Residues 15–25 (PSPTGYLHIGG) carry the 'HIGH' region motif. A 'KMSKS' region motif is present at residues 243–247 (KLSKR). Lys246 is an ATP binding site.

This sequence belongs to the class-I aminoacyl-tRNA synthetase family. Glutamate--tRNA ligase type 1 subfamily. As to quaternary structure, monomer.

It is found in the cytoplasm. It carries out the reaction tRNA(Glu) + L-glutamate + ATP = L-glutamyl-tRNA(Glu) + AMP + diphosphate. Its function is as follows. Catalyzes the attachment of glutamate to tRNA(Glu) in a two-step reaction: glutamate is first activated by ATP to form Glu-AMP and then transferred to the acceptor end of tRNA(Glu). The sequence is that of Glutamate--tRNA ligase 1 from Cereibacter sphaeroides (strain ATCC 17029 / ATH 2.4.9) (Rhodobacter sphaeroides).